Reading from the N-terminus, the 62-residue chain is Antitoxin VbhA (62 aa).

Positions 20–25 (SQRLEG) match the Inhibitory (S/T)XXXE(G/N) motif motif. Glu24 is an ATP binding site.

In terms of assembly, interacts with VbhT.

Functionally, antitoxin component of type II toxin-antitoxin (TA) system VbhT-VbhA. Acts by inhibiting the adenylyltransferase activity of VbhT; competes with ATP-binding and prevents productive ATP-binding to VbhT. This is Antitoxin VbhA from Bartonella schoenbuchensis (strain DSM 13525 / NCTC 13165 / R1).